Here is a 25-residue protein sequence, read N- to C-terminus: Toxin LyeTx 1 (25 aa).

Position 25 is a leucine amide (L25).

As to expression, expressed by the venom gland.

Its subcellular location is the secreted. Its function is as follows. Has antimicrobial activity against Gram-positive bacterium S.aureus (MIC=3.79 uM), Gram-negative bacterium E.coli (MIC=7.81 uM) and yeasts C.krusei (MIC=26.3 uM) and C.neoformans (MIC=13.2 uM). Has hemolytic activity against rabbit erythrocytes. Forms pores in lipid bilayers in vitro; pore formation is reduced when cholesterol is present in the bilayers. The polypeptide is Toxin LyeTx 1 (Lycosa erythrognatha (Wolf spider)).